A 93-amino-acid polypeptide reads, in one-letter code: Ubiquinol-cytochrome-c reductase complex assembly factor 3 (93 aa).

Topologically, residues 1–7 (MDSLRKM) are mitochondrial matrix. Residues 8-28 (LISVAMLGAGAGVGYALLVIV) form a helical membrane-spanning segment. Residues 23–80 (ALLVIVTPGERRKQEMLKEMPLQDPRSREEAARTQQLLLATLQEAATTQENVAWRKNW) are mediates lipid-binding. The Mitochondrial intermembrane portion of the chain corresponds to 29–93 (TPGERRKQEM…GEGGAGGRSP (65 aa)).

It belongs to the UQCC3 family. As to quaternary structure, associates with the ubiquinol-cytochrome c reductase complex (mitochondrial respiratory chain complex III or cytochrome b-c1 complex). Interacts with UQCC1. Forms a complex, named COMC, composed of UQCC1, UQCC2; UQCC3 and UQCC4; mediates MT-CYB hemylation and association with the first nuclear-encoded complex III subunit UQCRQ. Probably cleaved by OMA1 under mitochondrial stress conditions.

It localises to the mitochondrion inner membrane. In terms of biological role, required for the assembly of the ubiquinol-cytochrome c reductase complex (mitochondrial respiratory chain complex III or cytochrome b-c1 complex), mediating cytochrome b recruitment and probably stabilization within the complex. Thereby, plays an important role in ATP production by mitochondria. Cardiolipin-binding protein, it may also control the cardiolipin composition of mitochondria membranes and their morphology. The chain is Ubiquinol-cytochrome-c reductase complex assembly factor 3 from Homo sapiens (Human).